Reading from the N-terminus, the 151-residue chain is MATLEQNLQEMLQDAVKDLGCELWGIECQRVGRFMTVRLFIDKEGGVTVDDCADVSRQVSAILDVEDPIADKYNLEVSSPGLDRPLFTLPQFERYIGQDIAVHLRIPVMERRKWQGKLERIEKDMITLIVDDQEQILVFGNIQKANVVAKF.

This sequence belongs to the RimP family.

Its subcellular location is the cytoplasm. Functionally, required for maturation of 30S ribosomal subunits. The chain is Ribosome maturation factor RimP from Haemophilus influenzae (strain 86-028NP).